Reading from the N-terminus, the 119-residue chain is Holo-[acyl-carrier-protein] synthase (119 aa).

Mg(2+) contacts are provided by Asp-8 and Glu-58.

It belongs to the P-Pant transferase superfamily. AcpS family. Mg(2+) is required as a cofactor.

It is found in the cytoplasm. It carries out the reaction apo-[ACP] + CoA = holo-[ACP] + adenosine 3',5'-bisphosphate + H(+). Transfers the 4'-phosphopantetheine moiety from coenzyme A to a Ser of acyl-carrier-protein. The sequence is that of Holo-[acyl-carrier-protein] synthase from Bacillus thuringiensis subsp. konkukian (strain 97-27).